Reading from the N-terminus, the 581-residue chain is FAD-dependent monooxygenase DEP4 (581 aa).

43-46 (VWSK) provides a ligand contact to FAD. Residue 54–56 (FAQ) participates in NADP(+) binding. Residue valine 108 participates in FAD binding. Residues 183–202 (VGRSKSSYDAVYHLLCEGKR), 219–220 (AP), and 351–352 (DI) contribute to the NADP(+) site. Residue methionine 470 participates in FAD binding.

This sequence belongs to the FAD-binding monooxygenase family. FAD is required as a cofactor.

It participates in polyketide biosynthesis. Functionally, FAD-dependent monooxygenase; part of the gene cluster that mediates the biosynthesis of depudecin, a highly oxidized eleven-carbon linear polyketide that acts as a histone deacetylase (HDAC) inhibitor and makes a small contribution to pathogenesis. The reducing polyketide synthase DEP5 is the central enzyme in depudecin biosynthesis by yielding the backbone polyketide chain. The monooxygenases DEP2 and DEP4, as well as the uncharacterized protein DEP1, then act as tailoring enzymes to modify the intermediate polyketide chain into depudecin. The sequence is that of FAD-dependent monooxygenase DEP4 from Alternaria brassicicola (Dark leaf spot agent).